The chain runs to 147 residues: Hemoglobin subunit epsilon (147 aa).

The 145-residue stretch at 3–147 (HFTAEEKVAI…VAIALGHKYH (145 aa)) folds into the Globin domain. Residues S14 and S51 each carry the phosphoserine modification. H64 and H93 together coordinate heme b.

It belongs to the globin family. Heterotetramer of two alpha chains and two epsilon chains in early embryonic hemoglobin Gower-2; two zeta chains and two epsilon chains in early embryonic hemoglobin Gower-1. As to expression, red blood cells.

Functionally, the epsilon chain is a beta-type chain of early mammalian embryonic hemoglobin. The polypeptide is Hemoglobin subunit epsilon (HBE1) (Cebus kaapori (Ka'apor capuchin)).